The following is a 184-amino-acid chain: Photosystem I assembly protein Ycf4 (184 aa).

Helical transmembrane passes span 22-42 (FFWA…GTSS) and 57-77 (ISFF…LFIS).

It belongs to the Ycf4 family.

The protein resides in the plastid. The protein localises to the chloroplast thylakoid membrane. In terms of biological role, seems to be required for the assembly of the photosystem I complex. This Lemna minor (Common duckweed) protein is Photosystem I assembly protein Ycf4.